The primary structure comprises 196 residues: Autophagy-related protein 31 (196 aa).

The tract at residues 20–45 (IKNNKGPSNDDQPAYNNESKSTDGSD) is disordered. Polar residues predominate over residues 22–43 (NNKGPSNDDQPAYNNESKSTDG). Phosphoserine occurs at positions 38 and 40. Threonine 41 is modified (phosphothreonine). 2 positions are modified to phosphoserine: serine 44 and serine 116. A compositionally biased stretch (polar residues) spans 120–129 (EENQMRTLSS). The interval 120-145 (EENQMRTLSSHGDDKSNDEEEELSVD) is disordered. Serine 135, serine 143, serine 146, serine 153, serine 174, and serine 195 each carry phosphoserine. Positions 135–144 (SNDEEEELSV) are enriched in acidic residues.

As to quaternary structure, forms a stable complex with ATG17 and ATG29. Interacts directly with ATG29. The ATG17-ATG29-ATG31 complex interacts with the ATG1-ATG13 complex. Note=The interaction with the ATG1-ATG13 complex is induced by starvation. Highly phosphorylated. Ser-174 is phosphorylated constitutively. Phosphorylation at Ser-174 is required for autophagy induced by various autophagy stimuli such as nitrogen starvation and rapamycin treatment.

The protein resides in the cytoplasm. It localises to the cytoskeleton. It is found in the preautophagosomal structure. In terms of biological role, plays a role in starvation-induced autophagy. Involved in mitophagy. Functions with ATG17 and ATG29 at the preautophagosomal structure (PAS) in order to form normal autophagosomes under starvation conditions. May be involved in microtubule function, such as chromosome segregation and karyogamy. The protein is Autophagy-related protein 31 (ATG31) of Saccharomyces cerevisiae (strain ATCC 204508 / S288c) (Baker's yeast).